The primary structure comprises 178 residues: FXYD domain-containing ion transport regulator 5 (178 aa).

The signal sequence occupies residues 1 to 21 (MSLSSRLCLLTIVALILPSRG). The span at 21 to 59 (GQTPKKPTSIFTADQTSATTRDNVPDPDQTSPGVQTTPL) shows a compositional bias: polar residues. Residues 21–130 (GQTPKKPTSI…SYIEHPLDSN (110 aa)) form a disordered region. Over 22-145 (QTPKKPTSIF…YYDDTTLRKR (124 aa)) the chain is Extracellular. The segment covering 67–79 (TGSQTAAQTETQQ) has biased composition (low complexity). A compositionally biased stretch (polar residues) spans 80–100 (LTKMATSNPVSDPGPHTSSKK). Residues 146–166 (GLLVAAVLFITGIIILTSGKC) form a helical membrane-spanning segment. At 167–178 (RQLSQFCLNRHR) the chain is on the cytoplasmic side.

Belongs to the FXYD family. As to quaternary structure, regulatory subunit of the sodium/potassium-transporting ATPase which is composed of a catalytic alpha subunit, a non-catalytic beta subunit and an additional regulatory subunit. The regulatory subunit, a member of the FXYD protein family, modulates the enzymatic activity in a tissue- and isoform-specific way by changing affinities of the Na+/K+-ATPase toward Na(+), K(+) or ATP. Glycosylated. Expressed mainly in epithelial tissue, such as lung, intestine and kidney. Not detected in brain, liver, muscle, and heart.

It is found in the cell membrane. The protein localises to the basolateral cell membrane. In terms of biological role, associates with and regulates the activity of the sodium/potassium-transporting ATPase (NKA) which catalyzes the hydrolysis of ATP coupled with the exchange of Na(+) and K(+) ions across the plasma membrane. May increase NKA activity by increasing the apparent affinity for Na(+). Involved in down-regulation of E-cadherin which results in reduced cell adhesion. Promotes metastasis. The polypeptide is FXYD domain-containing ion transport regulator 5 (Fxyd5) (Mus musculus (Mouse)).